Reading from the N-terminus, the 760-residue chain is Armadillo-like helical domain-containing protein 4 (760 aa).

A signal peptide spans methionine 1–alanine 27. Over phenylalanine 28 to methionine 700 the chain is Extracellular. 6 disordered regions span residues leucine 49–proline 69, glycine 117–proline 143, arginine 216–serine 243, histidine 373–aspartate 392, threonine 474–arginine 495, and asparagine 536–proline 652. N-linked (GlcNAc...) asparagine glycosylation is present at asparagine 56. The span at arginine 216–threonine 228 shows a compositional bias: basic and acidic residues. Polar residues predominate over residues aspartate 380–methionine 390. A compositionally biased stretch (basic and acidic residues) spans threonine 474 to arginine 484. Acidic residues predominate over residues leucine 594–glycine 635. A helical membrane pass occupies residues leucine 701–isoleucine 721. Over lysine 722–phenylalanine 760 the chain is Cytoplasmic. A phosphoserine mark is found at serine 755 and serine 756.

As to quaternary structure, interacts with IL6ST; this interaction prevents IL6ST protein homodimerization and bridges ARMH4 with IL6R and STAT3 and therefore inhibits phosphorylation of STAT3 at 'Tyr-705'. Interacts (via cytoplasmic tail) with RICTOR; this interaction bridges ARMH4 to the mTORC2 complex and inhibits the mTORC2 kinase activity.

It is found in the membrane. May modulate immune response and may play a role in inflammation. Down-modulates STAT3 signaling throught direct interaction with IL6ST, resulting in the inhibition of phosphorylation of STAT3 at Tyr-705. May negatively regulates AKT signaling by modulating the activity of mTORC2 complex through RICTOR interaction. This chain is Armadillo-like helical domain-containing protein 4, found in Bos taurus (Bovine).